The primary structure comprises 487 residues: Glutamyl-tRNA(Gln) amidotransferase subunit A (487 aa).

Residues Lys-78 and Ser-153 each act as charge relay system in the active site. The active-site Acyl-ester intermediate is the Ser-177.

This sequence belongs to the amidase family. GatA subfamily. As to quaternary structure, heterotrimer of A, B and C subunits.

The enzyme catalyses L-glutamyl-tRNA(Gln) + L-glutamine + ATP + H2O = L-glutaminyl-tRNA(Gln) + L-glutamate + ADP + phosphate + H(+). Functionally, allows the formation of correctly charged Gln-tRNA(Gln) through the transamidation of misacylated Glu-tRNA(Gln) in organisms which lack glutaminyl-tRNA synthetase. The reaction takes place in the presence of glutamine and ATP through an activated gamma-phospho-Glu-tRNA(Gln). The chain is Glutamyl-tRNA(Gln) amidotransferase subunit A from Oleidesulfovibrio alaskensis (strain ATCC BAA-1058 / DSM 17464 / G20) (Desulfovibrio alaskensis).